A 181-amino-acid chain; its full sequence is MTTETISLIKSSIKSIQDYPKPGILFRDVTSLLEDAKAYQATIGLLVERYKDMGFTKVVGTEARGFLFGAPLALELGVGFVPVRKPGKLPRPTIAQSYELEYGIDTLEIHTDAIVEGDKVLVVDDLLATGGTIEATTKLIRQLGGEVEHAAFVINLPEIGGDKRLEALGLNVFSICDFEGH.

Belongs to the purine/pyrimidine phosphoribosyltransferase family. Homodimer.

Its subcellular location is the cytoplasm. The catalysed reaction is AMP + diphosphate = 5-phospho-alpha-D-ribose 1-diphosphate + adenine. It functions in the pathway purine metabolism; AMP biosynthesis via salvage pathway; AMP from adenine: step 1/1. In terms of biological role, catalyzes a salvage reaction resulting in the formation of AMP, that is energically less costly than de novo synthesis. This Vibrio parahaemolyticus serotype O3:K6 (strain RIMD 2210633) protein is Adenine phosphoribosyltransferase.